Consider the following 591-residue polypeptide: MNQGKIITVSGPLVVASGMQEANIQDICRVGHLGLVGEIIEMRRDQASIQVYEETSGIGPGEPVVTTGCPLSVELGPGLISEMFDGIQRPLDRFQKATDSDFLIRGVAIPSLDRKAKWAFIPKLSVGQEVVAGDILGTVQETAVIEHRIMVPYKVSGTLVAIHAGNFTVTDTVYEIKQEDGSIYQGSLMQTWPVRQSRPVAQKLIPVEPLVTGQRVIDTFFPVTKGGAAAVPGPFGAGKTVVQHQIAKFANVDIVIYVGCGERGNEMTDVLNEFPELIDPNTGQSIMERTVLIANTSNMPVAAREASIYTGITIAEYFRDMGYSVAIMADSTSRWAEALREMSGRLQEMPGDEGYPAYLGSRIAEYYERAGRVRTLGSQEREGTITAIGAVSPPGGDISEPVTQNTLRIVKVFWGLDAPLAQRRHFPAINWLTSYSLYQDDVGSYIDRKQESNWSNKVTRAMAILQREASLEEIVRLVGLDSLSEQDRLTMAVARQIREDYLQQNAFDSVDTFTSFPKQEAMLTNILTFNEEASKALSLGAYFKEIMEGTAQVRDRIARSKFIPEENLEQIKGLTQKVTKEIHHVLAKGGI.

233–240 (GPFGAGKT) serves as a coordination point for ATP.

The protein belongs to the ATPase alpha/beta chains family.

The enzyme catalyses ATP + H2O + 4 H(+)(in) = ADP + phosphate + 5 H(+)(out). In terms of biological role, produces ATP from ADP in the presence of a proton gradient across the membrane. The V-type alpha chain is a catalytic subunit. The chain is V-type ATP synthase alpha chain from Streptococcus pyogenes serotype M12 (strain MGAS2096).